The primary structure comprises 435 residues: MDWLQFFFLHPVSLYQGAAFPFALLFNYLCITESFPTRARYLFLLAGGGVLALAAMGPYALLIFIPALCAVAMISSLSPQEVHGLTFFFQMGWQTLCHLGLHYKEYYLCEPPPVRFYITLSSLMLLTQRVTSLSLDISEGKVEAAWRGTRSRSSLCEHLWDALPYISYLLFFPALLGGSLCSFQRFQACVQRPRSLYPSISFWALTWRGLQILGLECLKVALRRVVSAGAGLDDCQRLECIYIMWSTAGLFKLTYYSHWILDDSLLHAAGFGSEAGQRPGEERYVPDVDIWTLETTHRISLFARQWNRSTAQWLKRLVFQRSRRWPVLQTFAFSAWWHGLHPGQVFGFLCWSVMVKADYLIHTFANGCIRSWPLRLLYRSLTWAHTQIIIAYVMLAVEGRSFSSLCRLCCSYNSIFPVTYCLLLFLLARRKHKCN.

At 1 to 5 (MDWLQ) the chain is on the lumenal side. The helical transmembrane segment at 6-26 (FFFLHPVSLYQGAAFPFALLF) threads the bilayer. The Cytoplasmic segment spans residues 27–40 (NYLCITESFPTRAR). Residues 41 to 56 (YLFLLAGGGVLALAAM) form a helical membrane-spanning segment. Topologically, residues 57-59 (GPY) are lumenal. A helical transmembrane segment spans residues 60 to 76 (ALLIFIPALCAVAMISS). The Cytoplasmic segment spans residues 77–82 (LSPQEV). Residues 83 to 101 (HGLTFFFQMGWQTLCHLGL) form a helical membrane-spanning segment. The Lumenal segment spans residues 102 to 120 (HYKEYYLCEPPPVRFYITL). A helical transmembrane segment spans residues 121-136 (SSLMLLTQRVTSLSLD). The Cytoplasmic segment spans residues 137-206 (ISEGKVEAAW…YPSISFWALT (70 aa)). Residues 207–227 (WRGLQILGLECLKVALRRVVS) traverse the membrane as a helical segment. Over 228–240 (AGAGLDDCQRLEC) the chain is Lumenal. Residues 241–261 (IYIMWSTAGLFKLTYYSHWIL) traverse the membrane as a helical segment. Residues 262-324 (DDSLLHAAGF…KRLVFQRSRR (63 aa)) lie on the Cytoplasmic side of the membrane. Active-site residues include asparagine 307 and histidine 338. Residues 325-338 (WPVLQTFAFSAWWH) form a helical membrane-spanning segment. Over 339–340 (GL) the chain is Lumenal. A helical membrane pass occupies residues 341-357 (HPGQVFGFLCWSVMVKA). Residues 358 to 376 (DYLIHTFANGCIRSWPLRL) lie on the Cytoplasmic side of the membrane. The chain crosses the membrane as a helical span at residues 377–397 (LYRSLTWAHTQIIIAYVMLAV). Topologically, residues 398–407 (EGRSFSSLCR) are lumenal. A helical membrane pass occupies residues 408–428 (LCCSYNSIFPVTYCLLLFLLA). Residues 429–435 (RRKHKCN) lie on the Cytoplasmic side of the membrane.

This sequence belongs to the membrane-bound acyltransferase family. In terms of assembly, monomer. Not glycosylated.

It is found in the endoplasmic reticulum membrane. The catalysed reaction is octanoyl-CoA + L-seryl-[protein] = O-octanoyl-L-seryl-[protein] + CoA. The enzyme catalyses decanoyl-CoA + L-seryl-[protein] = O-decanoyl-L-seryl-[protein] + CoA. It carries out the reaction L-seryl-[protein] + acetyl-CoA = O-acetyl-L-seryl-[protein] + CoA. It catalyses the reaction L-seryl-[protein] + butanoyl-CoA = O-butanoyl-L-seryl-[protein] + CoA. The catalysed reaction is pentanoyl-CoA + L-seryl-[protein] = O-pentanoyl-L-seryl-[protein] + CoA. The enzyme catalyses hexanoyl-CoA + L-seryl-[protein] = O-hexanoyl-L-seryl-[protein] + CoA. It carries out the reaction heptanoyl-CoA + L-seryl-[protein] = O-heptanoyl-L-seryl-[protein] + CoA. It catalyses the reaction nonanoyl-CoA + L-seryl-[protein] = O-nonanoyl-L-seryl-[protein] + CoA. The catalysed reaction is L-seryl-[protein] + dodecanoyl-CoA = O-dodecanoyl-L-seryl-[protein] + CoA. The enzyme catalyses L-seryl-[protein] + tetradecanoyl-CoA = O-tetradecanoyl-L-seryl-[protein] + CoA. It carries out the reaction a fatty acyl-CoA + L-seryl-[protein] = O-fatty acyl-L-seryl-[protein] + CoA. In terms of biological role, catalyzes ghrelin acylation at 'Ser-3' using preferentially octanoyl-CoA, hexanoyl-CoA and decanoyl-CoA as acyl-CoA donors leading to ghrelin activity. In vitro uses also acyl-CoA donors of different lengths from short-chain (C2) to long-chain fatty acids (C16) knowing that acyl-CoA donors from butanoyl-CoA (C4) to dodecanoyl-CoA (C12) are more efficient compared to longer acyl-CoA donors, such as myristoyl-CoA (C14) and palmitoyl-CoA (C16) that are not efficient. The protein is Membrane-bound ghrelin O-acyltransferase MBOAT4 of Rattus norvegicus (Rat).